The chain runs to 468 residues: Chromosomal replication initiator protein DnaA (468 aa).

A domain I, interacts with DnaA modulators region spans residues 1–84 (MSSSLWLQCM…RFEVGSRPVA (84 aa)). The segment at 81–113 (RPVAAPKPAPTRTPADVAAESSAPAQLQARKPV) is disordered. The domain II stretch occupies residues 84–131 (AAPKPAPTRTPADVAAESSAPAQLQARKPVHKTWDDDAQAIADINHRS). Residues 132–348 (NVNPKHKFNN…GALNRVIANA (217 aa)) form a domain III, AAA+ region region. 4 residues coordinate ATP: Gly-176, Gly-178, Lys-179, and Thr-180. Residues 349-468 (NFTGRPITID…YSNLIRTLSS (120 aa)) are domain IV, binds dsDNA.

Belongs to the DnaA family. As to quaternary structure, oligomerizes as a right-handed, spiral filament on DNA at oriC.

Its subcellular location is the cytoplasm. Its function is as follows. Plays an essential role in the initiation and regulation of chromosomal replication. ATP-DnaA binds to the origin of replication (oriC) to initiate formation of the DNA replication initiation complex once per cell cycle. Binds the DnaA box (a 9 base pair repeat at the origin) and separates the double-stranded (ds)DNA. Forms a right-handed helical filament on oriC DNA; dsDNA binds to the exterior of the filament while single-stranded (ss)DNA is stabiized in the filament's interior. The ATP-DnaA-oriC complex binds and stabilizes one strand of the AT-rich DNA unwinding element (DUE), permitting loading of DNA polymerase. After initiation quickly degrades to an ADP-DnaA complex that is not apt for DNA replication. Binds acidic phospholipids. The sequence is that of Chromosomal replication initiator protein DnaA from Vibrio vulnificus (strain CMCP6).